The following is a 200-amino-acid chain: Claudin-11 (200 aa).

Residue Met1 is a topological domain, cytoplasmic. The chain crosses the membrane as a helical span at residues 2–22; that stretch reads VATCLQVVGFVTSFVGWIGVI. Residues 23 to 75 lie on the Extracellular side of the membrane; it reads VTTSTNDWVVTCGYTIPTCRKLDELGSKGLWADCVMATGLYHCKPLVDILPCR. The helical transmembrane segment at 76 to 96 threads the bilayer; it reads ALMIAASVLGLPAILLLLTVL. Residues 97 to 115 are Cytoplasmic-facing; that stretch reads PCIRMGQEPGVAKYRRAQL. Residues 116-136 traverse the membrane as a helical segment; that stretch reads AGVLLILLALCAIVATIWFPV. At 137–150 the chain is on the extracellular side; the sequence is CAHRETTIVSFGYS. A helical transmembrane segment spans residues 151 to 171; the sequence is LYAGWIGAVLCLVGGCVILCC. Residues 172–200 are Cytoplasmic-facing; the sequence is AGDAQAFGENRFYYTAGSSSPTHAKSAHV. Phosphoserine is present on residues Ser190 and Ser191.

This sequence belongs to the claudin family. As to quaternary structure, interacts with tetraspanin-3/TSPAN3. Interacts with OCLN.

Its subcellular location is the cell junction. It localises to the tight junction. The protein resides in the cell membrane. Functionally, plays a major role in tight junction-specific obliteration of the intercellular space, through calcium-independent cell-adhesion activity. The protein is Claudin-11 (CLDN11) of Pongo abelii (Sumatran orangutan).